A 393-amino-acid chain; its full sequence is Branched-chain-amino-acid aminotransferase, mitochondrial (393 aa).

Residues 1 to 16 (MLQRHSLKLGKFSIRT) constitute a mitochondrion transit peptide. The residue at position 219 (Lys219) is an N6-(pyridoxal phosphate)lysine. Thr315 carries the post-translational modification Phosphothreonine.

The protein belongs to the class-IV pyridoxal-phosphate-dependent aminotransferase family. It depends on pyridoxal 5'-phosphate as a cofactor.

Its subcellular location is the mitochondrion matrix. It catalyses the reaction L-leucine + 2-oxoglutarate = 4-methyl-2-oxopentanoate + L-glutamate. The enzyme catalyses L-isoleucine + 2-oxoglutarate = (S)-3-methyl-2-oxopentanoate + L-glutamate. The catalysed reaction is L-valine + 2-oxoglutarate = 3-methyl-2-oxobutanoate + L-glutamate. It carries out the reaction a 2-oxocarboxylate + L-methionine = 4-methylsulfanyl-2-oxobutanoate + an L-alpha-amino acid. Its pathway is amino-acid biosynthesis; L-isoleucine biosynthesis; L-isoleucine from 2-oxobutanoate: step 4/4. It participates in amino-acid biosynthesis; L-leucine biosynthesis; L-leucine from 3-methyl-2-oxobutanoate: step 4/4. It functions in the pathway amino-acid biosynthesis; L-valine biosynthesis; L-valine from pyruvate: step 4/4. The protein operates within amino-acid biosynthesis; L-methionine biosynthesis via salvage pathway; L-methionine from S-methyl-5-thio-alpha-D-ribose 1-phosphate: step 6/6. In terms of biological role, mitochondrial isozyme of branched-chain-amino-acid aminotransferase, involved in the biosynthesis of the branched chain amino acids (BCAAs) leucine, isoleucine, and valine. Catalyzes the formation of methionine from 2-keto-4-methylthiobutyrate (KMTB) in the methionine salvage pathway primarily using BCAAs (leucine, isoleucine, and valine) as the amino donors. Appears to be involved in the regulation of the cell cycle, although this may be indirect via metabolic changes. Connects BCAAs and TCA-cycle metabolism governing TCA-cycle flux to activate TORC1 signaling. High copy suppressor of a temperature-sensitive mutation in the ABC transporter, ATM1. This Saccharomyces cerevisiae (strain ATCC 204508 / S288c) (Baker's yeast) protein is Branched-chain-amino-acid aminotransferase, mitochondrial.